A 355-amino-acid polypeptide reads, in one-letter code: Biotin synthase (355 aa).

The 225-residue stretch at 51–275 (NTVKVNYLVN…VCPDKEIRIA (225 aa)) folds into the Radical SAM core domain. The [4Fe-4S] cluster site is built by Cys-66, Cys-70, and Cys-73. Residues Cys-110, Cys-143, Cys-203, and Arg-273 each coordinate [2Fe-2S] cluster.

This sequence belongs to the radical SAM superfamily. Biotin synthase family. As to quaternary structure, homodimer. The cofactor is [4Fe-4S] cluster. It depends on [2Fe-2S] cluster as a cofactor.

The catalysed reaction is (4R,5S)-dethiobiotin + (sulfur carrier)-SH + 2 reduced [2Fe-2S]-[ferredoxin] + 2 S-adenosyl-L-methionine = (sulfur carrier)-H + biotin + 2 5'-deoxyadenosine + 2 L-methionine + 2 oxidized [2Fe-2S]-[ferredoxin]. The protein operates within cofactor biosynthesis; biotin biosynthesis; biotin from 7,8-diaminononanoate: step 2/2. In terms of biological role, catalyzes the conversion of dethiobiotin (DTB) to biotin by the insertion of a sulfur atom into dethiobiotin via a radical-based mechanism. In Saccharopolyspora erythraea (strain ATCC 11635 / DSM 40517 / JCM 4748 / NBRC 13426 / NCIMB 8594 / NRRL 2338), this protein is Biotin synthase.